The primary structure comprises 165 residues: Putative ankyrin repeat domain-containing protein 20A5 (165 aa).

ANK repeat units follow at residues 66–95 (QHRT…QIDI), 99–128 (ENRT…NPNL), and 132–161 (YGNT…NIEA).

This chain is Putative ankyrin repeat domain-containing protein 20A5 (ANKRD20A5P), found in Homo sapiens (Human).